We begin with the raw amino-acid sequence, 179 residues long: Large ribosomal subunit protein uL16m (179 aa).

It belongs to the universal ribosomal protein uL16 family. As to quaternary structure, component of the mitochondrial ribosome large subunit.

It localises to the mitochondrion. This is Large ribosomal subunit protein uL16m (RPL16) from Arabidopsis thaliana (Mouse-ear cress).